Reading from the N-terminus, the 298-residue chain is ATP synthase gamma chain (298 aa).

This sequence belongs to the ATPase gamma chain family. As to quaternary structure, F-type ATPases have 2 components, CF(1) - the catalytic core - and CF(0) - the membrane proton channel. CF(1) has five subunits: alpha(3), beta(3), gamma(1), delta(1), epsilon(1). CF(0) has three main subunits: a, b and c.

It localises to the cell membrane. Functionally, produces ATP from ADP in the presence of a proton gradient across the membrane. The gamma chain is believed to be important in regulating ATPase activity and the flow of protons through the CF(0) complex. In Mycobacterium leprae (strain Br4923), this protein is ATP synthase gamma chain.